A 727-amino-acid polypeptide reads, in one-letter code: Pollen-specific leucine-rich repeat extensin-like protein 3 (727 aa).

The first 22 residues, 1 to 22 (MPHIYKQPLGIFQGFVPTLTDA), serve as a signal peptide directing secretion. The LRR 1 repeat unit spans residues 19–43 (LTDAEVSFIAQRQLLTLPENGELPD). Asparagine 80 is a glycosylation site (N-linked (GlcNAc...) asparagine). LRR repeat units follow at residues 107 to 131 (VAVV…LGLM), 132 to 154 (TDVA…SFEK), 156 to 179 (SLMH…VLSW), 180 to 202 (PAVK…ELFK), 203 to 226 (KDLD…LGES), 228 to 249 (ASVV…IGNM), 250 to 273 (KNLN…IGKL), 275 to 296 (NVNV…SFVG), and 297 to 321 (LTSM…ICKL). N-linked (GlcNAc...) asparagine glycosylation occurs at asparagine 326. Residues 381–727 (SKDKCAGGSS…SPPPPMFQGY (347 aa)) form a disordered region. 5 stretches are compositionally biased toward pro residues: residues 397 to 419 (SPSP…PQPN), 446 to 457 (SPPPASSPPTSP), 466 to 479 (VHKP…PQPN), 492 to 677 (SPPP…PKMS), and 718 to 727 (SPPPPMFQGY). The interval 432–727 (SPPPPQQPHH…SPPPPMFQGY (296 aa)) is contains the Ser-Pro(4) repeats.

In terms of processing, hydroxylated on proline residues in the S-P-P-P-P repeat. O-glycosylated on hydroxyprolines. As to expression, expressed in flowers, stamen, pollen, and pollinated carpels.

Its subcellular location is the secreted. It is found in the cell wall. In terms of biological role, modulates cell morphogenesis by regulating cell wall formation and assembly, and/or growth polarization. This Arabidopsis thaliana (Mouse-ear cress) protein is Pollen-specific leucine-rich repeat extensin-like protein 3 (PEX3).